The chain runs to 71 residues: Conotoxin Pl071 (71 aa).

A signal peptide spans 1–20 (MSRLFMILLVICVITLGTDA). A propeptide spanning residues 21 to 31 (SQAEDSGTEKR) is cleaved from the precursor. Tyr69 carries the tyrosine amide modification.

The protein belongs to the conotoxin NSf-1 superfamily. As to expression, expressed by the venom duct.

It is found in the secreted. Its function is as follows. Probable neurotoxin with unknown target. Possibly targets ion channels. The sequence is that of Conotoxin Pl071 from Conus planorbis (Planorbis cone).